The sequence spans 475 residues: Pup--protein ligase (475 aa).

Glutamate 19 provides a ligand contact to Mg(2+). Arginine 64 contributes to the ATP binding site. A Mg(2+)-binding site is contributed by tyrosine 66. Aspartate 68 functions as the Proton acceptor in the catalytic mechanism. Glutamate 74 is a Mg(2+) binding site. ATP contacts are provided by threonine 77 and tryptophan 436.

Belongs to the Pup ligase/Pup deamidase family. Pup-conjugating enzyme subfamily.

The catalysed reaction is ATP + [prokaryotic ubiquitin-like protein]-L-glutamate + [protein]-L-lysine = ADP + phosphate + N(6)-([prokaryotic ubiquitin-like protein]-gamma-L-glutamyl)-[protein]-L-lysine.. It functions in the pathway protein degradation; proteasomal Pup-dependent pathway. The protein operates within protein modification; protein pupylation. Catalyzes the covalent attachment of the prokaryotic ubiquitin-like protein modifier Pup to the proteasomal substrate proteins, thereby targeting them for proteasomal degradation. This tagging system is termed pupylation. The ligation reaction involves the side-chain carboxylate of the C-terminal glutamate of Pup and the side-chain amino group of a substrate lysine. The polypeptide is Pup--protein ligase (Corynebacterium aurimucosum (strain ATCC 700975 / DSM 44827 / CIP 107346 / CN-1) (Corynebacterium nigricans)).